A 500-amino-acid chain; its full sequence is Aldehyde dehydrogenase, mitochondrial (500 aa).

Residues lysine 35, lysine 56, and lysine 142 each carry the N6-acetyllysine modification. 245–250 lines the NAD(+) pocket; that stretch reads GSTEVG. The Proton acceptor role is filled by glutamate 268. The Nucleophile role is filled by cysteine 302. N6-acetyllysine is present on residues lysine 358, lysine 366, lysine 409, lysine 411, lysine 424, and lysine 434.

The protein belongs to the aldehyde dehydrogenase family. Homotetramer. In response to mitochondrial stress, the precursor protein is ubiquitinated by the SIFI complex in the cytoplasm before mitochondrial import, leading to its degradation. Within the SIFI complex, UBR4 initiates ubiquitin chain that are further elongated or branched by KCMF1.

Its subcellular location is the mitochondrion matrix. The enzyme catalyses an aldehyde + NAD(+) + H2O = a carboxylate + NADH + 2 H(+). The protein operates within alcohol metabolism; ethanol degradation; acetate from ethanol: step 2/2. Functionally, required for clearance of cellular formaldehyde, a cytotoxic and carcinogenic metabolite that induces DNA damage. This chain is Aldehyde dehydrogenase, mitochondrial (ALDH2), found in Equus caballus (Horse).